The primary structure comprises 256 residues: Chlorophyll a-b binding protein CP24 10A, chloroplastic (256 aa).

2 helical membrane passes run 106–126 and 134–154; these read WAMAAVLGIFVGQAWSGIPWF and AIAPFSFGTLLGTQLILMGWV.

This sequence belongs to the ELIP/psbS family.

The protein resides in the plastid. It localises to the chloroplast thylakoid membrane. This Solanum lycopersicum (Tomato) protein is Chlorophyll a-b binding protein CP24 10A, chloroplastic (CAP10A).